Consider the following 230-residue polypeptide: Large ribosomal subunit protein uL1 (230 aa).

It belongs to the universal ribosomal protein uL1 family. In terms of assembly, part of the 50S ribosomal subunit.

Functionally, binds directly to 23S rRNA. The L1 stalk is quite mobile in the ribosome, and is involved in E site tRNA release. Its function is as follows. Protein L1 is also a translational repressor protein, it controls the translation of the L11 operon by binding to its mRNA. This chain is Large ribosomal subunit protein uL1, found in Bifidobacterium adolescentis (strain ATCC 15703 / DSM 20083 / NCTC 11814 / E194a).